Consider the following 366-residue polypeptide: MAWSQSARKPMIGLLFRAQQHSARGYSYSAFQAHLSSSNVDQSATLLRRFSSEVPASEQMNLIKQLRERTSAPIKDVKASLVSCNWDIDVAQKDLRKRGVVLAAKKSSRTAAEGLLAIAQDEKRAAVVELNCETDFVARNDVFQYLASSLAKLALSARDPGELVFPFGPDYLENLNVNLDHPKLSGETTVQSAVTEVAAMVGENVKFRRGFIMSTTAHGVVCSYMHTCPQPGLGRLAGLITLEAEDSNAPLDALQRVGKSIAMHIVATKPLFLSKELVSASAVENERDILRTQAESSGKSQMAMEKMVEGRLRKYFEEVVLLEQKYVVNDSTNIKSVLNDLSKEVGSKVTVGNFARMEVGEGVSKA.

Residues Met-1–Phe-50 constitute a mitochondrion transit peptide.

Belongs to the EF-Ts family.

It is found in the mitochondrion. Its function is as follows. Associates with the EF-Tu.GDP complex and induces the exchange of GDP to GTP. It remains bound to the aminoacyl-tRNA.EF-Tu.GTP complex up to the GTP hydrolysis stage on the ribosome. The polypeptide is Elongation factor Ts, mitochondrial (Oryza sativa subsp. japonica (Rice)).